The primary structure comprises 155 residues: 6,7-dimethyl-8-ribityllumazine synthase (155 aa).

Residues Phe-24, 58–60, and 82–84 each bind 5-amino-6-(D-ribitylamino)uracil; these read AFE and VII. A (2S)-2-hydroxy-3-oxobutyl phosphate-binding site is contributed by 87–88; the sequence is ST. The Proton donor role is filled by His-90. Phe-115 contributes to the 5-amino-6-(D-ribitylamino)uracil binding site. Residue Arg-129 participates in (2S)-2-hydroxy-3-oxobutyl phosphate binding.

It belongs to the DMRL synthase family.

It carries out the reaction (2S)-2-hydroxy-3-oxobutyl phosphate + 5-amino-6-(D-ribitylamino)uracil = 6,7-dimethyl-8-(1-D-ribityl)lumazine + phosphate + 2 H2O + H(+). Its pathway is cofactor biosynthesis; riboflavin biosynthesis; riboflavin from 2-hydroxy-3-oxobutyl phosphate and 5-amino-6-(D-ribitylamino)uracil: step 1/2. In terms of biological role, catalyzes the formation of 6,7-dimethyl-8-ribityllumazine by condensation of 5-amino-6-(D-ribitylamino)uracil with 3,4-dihydroxy-2-butanone 4-phosphate. This is the penultimate step in the biosynthesis of riboflavin. This Pelodictyon phaeoclathratiforme (strain DSM 5477 / BU-1) protein is 6,7-dimethyl-8-ribityllumazine synthase.